The chain runs to 204 residues: Methylthioribulose-1-phosphate dehydratase (204 aa).

H94 and H96 together coordinate Zn(2+).

This sequence belongs to the aldolase class II family. MtnB subfamily. Zn(2+) is required as a cofactor.

The catalysed reaction is 5-(methylsulfanyl)-D-ribulose 1-phosphate = 5-methylsulfanyl-2,3-dioxopentyl phosphate + H2O. Its pathway is amino-acid biosynthesis; L-methionine biosynthesis via salvage pathway; L-methionine from S-methyl-5-thio-alpha-D-ribose 1-phosphate: step 2/6. In terms of biological role, catalyzes the dehydration of methylthioribulose-1-phosphate (MTRu-1-P) into 2,3-diketo-5-methylthiopentyl-1-phosphate (DK-MTP-1-P). This is Methylthioribulose-1-phosphate dehydratase from Enterobacter sp. (strain 638).